We begin with the raw amino-acid sequence, 28 residues long: Taicatoxin, alpha-neurotoxin-like component (28 aa).

A disulfide bond links Cys3 and Cys21.

The protein belongs to the three-finger toxin family. Long-chain subfamily. Type II alpha-neurotoxin sub-subfamily. In terms of assembly, heterotrimer composed of this alpha-neurotoxin-like peptide of 8 kDa, a neurotoxic phospholipase of 16 kDa (AC Q7LZG2) and a serine protease inhibitor of 7 kDa (AC B7S4N9) at an approximate stoichiometry of 1:1:4; non-covalently linked. As to expression, expressed by the venom gland.

Its subcellular location is the secreted. The heterotrimer blocks the voltage-dependent L-type calcium channels (Cav1/CACNA1) from the heart, and the small conductance calcium-activated potassium channels (KCa2/KCNN) in the chromaffin cells and in the brain. Is very toxic to mice. The protein is Taicatoxin, alpha-neurotoxin-like component of Oxyuranus scutellatus scutellatus (Australian taipan).